Consider the following 741-residue polypeptide: Catalase-peroxidase (741 aa).

Residues 1–23 (MLKKIVTALGMSGMLLASSNAIA) form the signal peptide. Positions 102–223 (WHDAGTYRIY…YAATQMGLIY (122 aa)) form a cross-link, tryptophyl-tyrosyl-methioninium (Trp-Tyr) (with M-249). The active-site Proton acceptor is the His-103. Residues 223–249 (YVNPEGPDGKPDIKGAASEIRQAFRAM) constitute a cross-link (tryptophyl-tyrosyl-methioninium (Tyr-Met) (with W-102)). His-264 is a heme b binding site.

This sequence belongs to the peroxidase family. Peroxidase/catalase subfamily. In terms of assembly, homodimer or homotetramer. The cofactor is heme b. Post-translationally, formation of the three residue Trp-Tyr-Met cross-link is important for the catalase, but not the peroxidase activity of the enzyme.

It catalyses the reaction H2O2 + AH2 = A + 2 H2O. The catalysed reaction is 2 H2O2 = O2 + 2 H2O. Its function is as follows. Bifunctional enzyme with both catalase and broad-spectrum peroxidase activity. The chain is Catalase-peroxidase from Francisella tularensis subsp. tularensis (strain WY96-3418).